The sequence spans 271 residues: 4-hydroxy-tetrahydrodipicolinate reductase (271 aa).

NAD(+) contacts are provided by residues 11 to 16 (GGSGRM) and glutamate 37. Residue arginine 38 coordinates NADP(+). Residues 101-103 (GTT) and 125-128 (APNM) each bind NAD(+). Histidine 158 functions as the Proton donor/acceptor in the catalytic mechanism. Histidine 159 is a (S)-2,3,4,5-tetrahydrodipicolinate binding site. Lysine 162 (proton donor) is an active-site residue. 168 to 169 (GT) contributes to the (S)-2,3,4,5-tetrahydrodipicolinate binding site.

The protein belongs to the DapB family.

The protein resides in the cytoplasm. The enzyme catalyses (S)-2,3,4,5-tetrahydrodipicolinate + NAD(+) + H2O = (2S,4S)-4-hydroxy-2,3,4,5-tetrahydrodipicolinate + NADH + H(+). It catalyses the reaction (S)-2,3,4,5-tetrahydrodipicolinate + NADP(+) + H2O = (2S,4S)-4-hydroxy-2,3,4,5-tetrahydrodipicolinate + NADPH + H(+). It participates in amino-acid biosynthesis; L-lysine biosynthesis via DAP pathway; (S)-tetrahydrodipicolinate from L-aspartate: step 4/4. Its function is as follows. Catalyzes the conversion of 4-hydroxy-tetrahydrodipicolinate (HTPA) to tetrahydrodipicolinate. The chain is 4-hydroxy-tetrahydrodipicolinate reductase from Shewanella loihica (strain ATCC BAA-1088 / PV-4).